A 135-amino-acid polypeptide reads, in one-letter code: Large ribosomal subunit protein uL22 (135 aa).

This sequence belongs to the universal ribosomal protein uL22 family. In terms of assembly, part of the 50S ribosomal subunit.

This protein binds specifically to 23S rRNA; its binding is stimulated by other ribosomal proteins, e.g. L4, L17, and L20. It is important during the early stages of 50S assembly. It makes multiple contacts with different domains of the 23S rRNA in the assembled 50S subunit and ribosome. Its function is as follows. The globular domain of the protein is located near the polypeptide exit tunnel on the outside of the subunit, while an extended beta-hairpin is found that lines the wall of the exit tunnel in the center of the 70S ribosome. This is Large ribosomal subunit protein uL22 from Malacoplasma penetrans (strain HF-2) (Mycoplasma penetrans).